A 274-amino-acid chain; its full sequence is Ribosomal RNA small subunit methyltransferase A (274 aa).

The S-adenosyl-L-methionine site is built by asparagine 27, leucine 29, glycine 54, glutamate 75, aspartate 100, and asparagine 121.

Belongs to the class I-like SAM-binding methyltransferase superfamily. rRNA adenine N(6)-methyltransferase family. RsmA subfamily.

Its subcellular location is the cytoplasm. The catalysed reaction is adenosine(1518)/adenosine(1519) in 16S rRNA + 4 S-adenosyl-L-methionine = N(6)-dimethyladenosine(1518)/N(6)-dimethyladenosine(1519) in 16S rRNA + 4 S-adenosyl-L-homocysteine + 4 H(+). Its function is as follows. Specifically dimethylates two adjacent adenosines (A1518 and A1519) in the loop of a conserved hairpin near the 3'-end of 16S rRNA in the 30S particle. May play a critical role in biogenesis of 30S subunits. The protein is Ribosomal RNA small subunit methyltransferase A of Acinetobacter baylyi (strain ATCC 33305 / BD413 / ADP1).